We begin with the raw amino-acid sequence, 667 residues long: Leucine aminopeptidase 2 (667 aa).

Residues 188–190 (QCQ) and 318–323 (PYGGME) contribute to the a peptide site. Position 347 (H347) interacts with Zn(2+). E348 functions as the Proton acceptor in the catalytic mechanism. Positions 351 and 370 each coordinate Zn(2+). The active-site Proton donor is the Y436.

The protein belongs to the peptidase M1 family. It depends on Zn(2+) as a cofactor.

It is found in the cytoplasm. Its subcellular location is the nucleus. The enzyme catalyses an epoxide + H2O = an ethanediol. Functionally, aminopeptidase that preferentially cleaves di- and tripeptides. Also has low epoxide hydrolase activity (in vitro). Can hydrolyze the epoxide leukotriene LTA(4) but it forms preferentially 5,6-dihydroxy-7,9,11,14-eicosatetraenoic acid rather than the cytokine leukotriene B(4) as the product compared to the homologous mammalian enzyme (in vitro). The protein is Leucine aminopeptidase 2 (ara-1) of Neurospora crassa (strain ATCC 24698 / 74-OR23-1A / CBS 708.71 / DSM 1257 / FGSC 987).